The primary structure comprises 126 residues: Cyclin-dependent kinase 2-associated protein 2 (126 aa).

The tract at residues 1-48 (MSYKPIAPAPSSTPGSSTPGPGTPVPTGSVPSPSGSVPGAGAPFRPLF) is disordered. Low complexity predominate over residues 9–43 (APSSTPGSSTPGPGTPVPTGSVPSPSGSVPGAGAP). Residues 64–106 (PPGAQGSQSTYTDLLSVIEEMGKEIRPTYAGSKSAMERLKRGI) form an interaction with CDK2 region.

The protein belongs to the CDK2AP family. As to quaternary structure, component of the nucleosome remodeling and deacetylase (NuRD) repressor complex, composed of core proteins MTA1, MTA2, MTA3, RBBP4, RBBP7, HDAC1, HDAC2, MBD2, MBD3, and peripherally associated proteins CDK2AP1, CDK2AP2, GATAD2A, GATAD2B, CHD3, CHD4 and CHD5. The exact stoichiometry of the NuRD complex is unknown, and some subunits such as MBD2 and MBD3, GATAD2A and GATAD2B, and CHD3, CHD4 and CHD5 define mutually exclusive NuRD complexes. Interacts with CDK2AP1. Interacts with CDK2. Interacts with MAPK1. Post-translationally, phosphorylated by MAPK1 and CDK2. Ubiquitous.

The protein resides in the cytoplasm. Its subcellular location is the nucleus. In terms of biological role, acts as a component of the histone deacetylase NuRD complex which participates in the remodeling of chromatin. Inhibits cell cycle G1/S phase transition by repressing CDK2 expression and activation; represses CDK2 activation by inhibiting its interaction with cyclin E and A. Plays a role in regulating the self-renewal of embryonic stem cells (ESCs) and in maintaining cell survival during terminal differentiation of ESCs. Regulates microtubule organization of metaphase II oocytes. The chain is Cyclin-dependent kinase 2-associated protein 2 (CDK2AP2) from Homo sapiens (Human).